We begin with the raw amino-acid sequence, 361 residues long: MQKIVQNQTTESLIRKDLQKFSAYSSARSLKVDGDIWLNANESPYNDEYLYNRYPEPQPRKLVEKLAKIYDVDASNILVTRGSDEGIDLLFRLYCEYQKDSAFAVEPTFGMYKIAAQLQGVDYKTLKLKEENNFEINITELLANIPDNCKLLFLCTPNNPTGKSIPLADIEQILSELAGNCVVVVDEAYIEFSNEKSVSSIINKYENLVVLRTLSKSFGMAGLRLGVVITNSDRIVWLRKILAPYPIPKTTESTILAMLDDENLANIASQIIEIKEQREHLYQALSQMKIVDKLWSSDANFILVRFRESIFNKLIDNKIVVRSMAHFFNDEKVLRISIGTVSENKRLIEVLQKLSSEYETK.

N6-(pyridoxal phosphate)lysine is present on K216.

Belongs to the class-II pyridoxal-phosphate-dependent aminotransferase family. Histidinol-phosphate aminotransferase subfamily. As to quaternary structure, homodimer. Requires pyridoxal 5'-phosphate as cofactor.

The catalysed reaction is L-histidinol phosphate + 2-oxoglutarate = 3-(imidazol-4-yl)-2-oxopropyl phosphate + L-glutamate. It participates in amino-acid biosynthesis; L-histidine biosynthesis; L-histidine from 5-phospho-alpha-D-ribose 1-diphosphate: step 7/9. This Francisella philomiragia subsp. philomiragia (strain ATCC 25017 / CCUG 19701 / FSC 153 / O#319-036) protein is Histidinol-phosphate aminotransferase.